The sequence spans 210 residues: tRNA (guanine-N(7)-)-methyltransferase (210 aa).

Positions 43, 68, 95, and 117 each coordinate S-adenosyl-L-methionine. The active site involves Asp117. Residues Lys121, Asp153, and 190–193 each bind substrate; that span reads TEYE.

This sequence belongs to the class I-like SAM-binding methyltransferase superfamily. TrmB family.

It carries out the reaction guanosine(46) in tRNA + S-adenosyl-L-methionine = N(7)-methylguanosine(46) in tRNA + S-adenosyl-L-homocysteine. Its pathway is tRNA modification; N(7)-methylguanine-tRNA biosynthesis. In terms of biological role, catalyzes the formation of N(7)-methylguanine at position 46 (m7G46) in tRNA. The chain is tRNA (guanine-N(7)-)-methyltransferase from Macrococcus caseolyticus (strain JCSC5402) (Macrococcoides caseolyticum).